We begin with the raw amino-acid sequence, 331 residues long: NADH-quinone oxidoreductase subunit H (331 aa).

The next 9 helical transmembrane spans lie at 5-25 (LFFV…MASL), 45-65 (GPDM…IKLF), 78-98 (FIFL…LAPV), 122-142 (VLYI…AGLA), 156-176 (VVAL…VVMV), 192-212 (IFNW…MASF), 245-265 (FFIG…LLFL), 271-291 (FLFI…FFFF), and 311-331 (WKIL…ALLI).

This sequence belongs to the complex I subunit 1 family. In terms of assembly, NDH-1 is composed of 14 different subunits. Subunits NuoA, H, J, K, L, M, N constitute the membrane sector of the complex.

It localises to the cell inner membrane. The catalysed reaction is a quinone + NADH + 5 H(+)(in) = a quinol + NAD(+) + 4 H(+)(out). NDH-1 shuttles electrons from NADH, via FMN and iron-sulfur (Fe-S) centers, to quinones in the respiratory chain. The immediate electron acceptor for the enzyme in this species is believed to be ubiquinone. Couples the redox reaction to proton translocation (for every two electrons transferred, four hydrogen ions are translocated across the cytoplasmic membrane), and thus conserves the redox energy in a proton gradient. This subunit may bind ubiquinone. The polypeptide is NADH-quinone oxidoreductase subunit H (Campylobacter concisus (strain 13826)).